A 174-amino-acid chain; its full sequence is Co-chaperone protein HscB (174 aa).

The J domain maps to 2 to 74 (DYFTLFGLPA…LKRAEYMLSL (73 aa)).

Belongs to the HscB family. Interacts with HscA and stimulates its ATPase activity. Interacts with IscU.

Functionally, co-chaperone involved in the maturation of iron-sulfur cluster-containing proteins. Seems to help targeting proteins to be folded toward HscA. The protein is Co-chaperone protein HscB of Yersinia pseudotuberculosis serotype O:1b (strain IP 31758).